We begin with the raw amino-acid sequence, 372 residues long: 4-hydroxy-3-methylbut-2-en-1-yl diphosphate synthase (flavodoxin) (372 aa).

[4Fe-4S] cluster-binding residues include Cys-270, Cys-273, Cys-305, and Glu-312.

Belongs to the IspG family. [4Fe-4S] cluster serves as cofactor.

The catalysed reaction is (2E)-4-hydroxy-3-methylbut-2-enyl diphosphate + oxidized [flavodoxin] + H2O + 2 H(+) = 2-C-methyl-D-erythritol 2,4-cyclic diphosphate + reduced [flavodoxin]. The protein operates within isoprenoid biosynthesis; isopentenyl diphosphate biosynthesis via DXP pathway; isopentenyl diphosphate from 1-deoxy-D-xylulose 5-phosphate: step 5/6. In terms of biological role, converts 2C-methyl-D-erythritol 2,4-cyclodiphosphate (ME-2,4cPP) into 1-hydroxy-2-methyl-2-(E)-butenyl 4-diphosphate. This is 4-hydroxy-3-methylbut-2-en-1-yl diphosphate synthase (flavodoxin) from Salmonella arizonae (strain ATCC BAA-731 / CDC346-86 / RSK2980).